Reading from the N-terminus, the 425-residue chain is MESPDSSSGSAPPRVLRRQQQQPGSAPELPPGFRFHPTDEELVVHYLKKKAASVPLPVTIIAEVDLYKFDPWELPEKANFGEQEWYFFSPRDRKYPNGARPNRAATSGYWKATGTDKPIMASGSTREKVGVKKALVFYRGKPPKGVKTNWIMHEYRLTDTSSSAAAVATTRQPPPPITGGSRGAVSLRLDDWVLCRIYKKTNKAGAGQRSMECEDSVEDAVAAYAPSSQQHATAAAGMAGSDGAGGVAAAHGGDYSSLLHHDSHEDTFLVNGLLTAEDAAGLSTGASSLSQLAAAARAAATPCDATKQLLAPSPTPFNWFEAFLPRAKEFPSGLSRSSRDIGDMSLSSTVDRSLSEAGAVAIDTGDAANGANTMPAFINPLGVQGATYQQHQAIMGASLPSESAAAAAACNFQHPFQLSRVNWDS.

Positions 1–10 (MESPDSSSGS) are enriched in polar residues. Positions 1–34 (MESPDSSSGSAPPRVLRRQQQQPGSAPELPPGFR) are disordered. Positions 12-23 (PPRVLRRQQQQP) are enriched in low complexity. In terms of domain architecture, NAC spans 29-200 (LPPGFRFHPT…DWVLCRIYKK (172 aa)). The DNA-binding element occupies 129–206 (VGVKKALVFY…IYKKTNKAGA (78 aa)).

It is found in the nucleus. Its function is as follows. Transcription factor of the NAC family associated with male fertility. The protein is NAC transcription factor ONAC010 (ONAC010) of Oryza sativa subsp. indica (Rice).